The sequence spans 168 residues: MFLTYFDAMPRRVLALVSLACVALLAFGLYLQHVVGLEPCPMCIVQRYALVLVAVVAGITAVAKSRGLLITGSGLLVLLSGFGAFVAARQSFLQWYPPEVASCGRDFYGMIETFPLKRAIPMIFKGSGDCTKIDWTFLGLSIANWSFLCFVAIALVGLVLITRLARQR.

At Met-1–Val-13 the chain is on the cytoplasmic side. Residues Leu-14–Tyr-30 form a helical membrane-spanning segment. Over Leu-31–Tyr-48 the chain is Periplasmic. A disulfide bridge connects residues Cys-40 and Cys-43. A helical membrane pass occupies residues Ala-49–Lys-64. Topologically, residues Ser-65–Ile-70 are cytoplasmic. A helical transmembrane segment spans residues Thr-71 to Ala-88. Over Arg-89–Asn-144 the chain is Periplasmic. A disulfide bridge links Cys-103 with Cys-130. The helical transmembrane segment at Trp-145 to Arg-163 threads the bilayer. Residues Leu-164–Arg-168 are Cytoplasmic-facing.

Belongs to the DsbB family.

The protein resides in the cell inner membrane. In terms of biological role, required for disulfide bond formation in some periplasmic proteins. Acts by oxidizing the DsbA protein. In Polaromonas sp. (strain JS666 / ATCC BAA-500), this protein is Disulfide bond formation protein B.